The chain runs to 319 residues: tRNA U34 carboxymethyltransferase (319 aa).

Carboxy-S-adenosyl-L-methionine contacts are provided by residues lysine 88, tryptophan 102, lysine 107, glycine 126, 176-177, methionine 192, tyrosine 196, and arginine 311; that span reads LE.

Belongs to the class I-like SAM-binding methyltransferase superfamily. CmoB family. Homotetramer.

The enzyme catalyses carboxy-S-adenosyl-L-methionine + 5-hydroxyuridine(34) in tRNA = 5-carboxymethoxyuridine(34) in tRNA + S-adenosyl-L-homocysteine + H(+). Catalyzes carboxymethyl transfer from carboxy-S-adenosyl-L-methionine (Cx-SAM) to 5-hydroxyuridine (ho5U) to form 5-carboxymethoxyuridine (cmo5U) at position 34 in tRNAs. The chain is tRNA U34 carboxymethyltransferase from Azotobacter vinelandii (strain DJ / ATCC BAA-1303).